Reading from the N-terminus, the 2274-residue chain is Adenomatous polyposis coli protein 2 (2274 aa).

A coiled-coil region spans residues 5-59 (MASYEQLVRQVEALKAENTHLRQELRDNSSHLSKLETETSGMKEVLKHLQGKLEQ). 2 disordered regions span residues 97 to 120 (GPEP…KDSF) and 248 to 269 (VEEE…QPGN). ARM repeat units follow at residues 301–341 (PESC…GAKD), 472–511 (ANKA…NLSW), 515–555 (INSK…NLSA), 557–602 (STEN…NVSS), 608–647 (EDYR…NLSA), and 650–689 (PRDQ…NLLA). Residues 832-856 (AAKAKAKLALAVARIDRLVEDISAL) are a coiled coil. Disordered regions lie at residues 859-901 (SSDD…GSRA), 1061-1143 (CSSL…NCVQ), and 1165-1216 (SIAS…TSQF). Residues 861-870 (DDSFSLSSGD) are compositionally biased toward low complexity. Repeat unit 1 spans residues 1049 to 1068 (LVAQDGPMSLSRCSSLSSLS). The tract at residues 1049–1565 (LVAQDGPMSL…SLTSSASSLS (517 aa)) is 5 X 20 AA approximate repeat of F-X-V-E-X-T-P-X-C-F-S-R-X-S-S-L-S-S-L-S. The tract at residues 1049–1565 (LVAQDGPMSL…SLTSSASSLS (517 aa)) is interaction with CTNNB1. Over residues 1077–1086 (QAENLDSDSS) the composition is skewed to polar residues. Residues 1092-1103 (EAGPGEAELGRA) show a composition bias toward low complexity. Residues 1133 to 1143 (TPSSSSENCVQ) show a composition bias toward polar residues. Copy 2 of the repeat occupies 1140 to 1159 (NCVQETPLVLSRCSSVSSLG). Repeat 3 spans residues 1250-1269 (FTVEKPDENFSCASSLSALA). Disordered stretches follow at residues 1290–1323 (ERAV…SATD), 1368–1480 (RGDD…LQSL), 1493–1631 (FYDS…DIRP), 1699–2003 (STLQ…RGRP), 2022–2122 (PRQP…IKDE), and 2135–2274 (TALP…SLLE). The segment covering 1374–1397 (TDSAEGTPVNFSSAASLSDETLQG) has biased composition (polar residues). Copy 4 of the repeat occupies 1375-1394 (DSAEGTPVNFSSAASLSDET). The segment covering 1399–1411 (SRDKPAGPGDRQK) has biased composition (basic and acidic residues). Residues 1455-1470 (RPQSARSNRDSSCQTR) show a composition bias toward polar residues. Residues 1517–1529 (LKREKPAGRKETP) are compositionally biased toward basic and acidic residues. Repeat 5 spans residues 1546-1565 (LIVDETPPCYSLTSSASSLS). A compositionally biased stretch (low complexity) spans 1556–1574 (SLTSSASSLSEPEAPEQPA). Phosphoserine is present on residues Ser-1563 and Ser-1565. Residues 1608-1624 (PRRRTQVPGSRRRKPRA) are compositionally biased toward basic residues. Composition is skewed to low complexity over residues 1780–1795 (SGPC…SGTT) and 1839–1868 (LAKT…TPTG). The required for localization to microtubules and function in microtubule stabilization stretch occupies residues 1792-1871 (SGTTQPETVT…PLATPTGGPL (80 aa)). Ser-1861 carries the phosphoserine modification. Residues 1910 to 1921 (RVPPPLARPSPE) are compositionally biased toward pro residues. 2 stretches are compositionally biased toward low complexity: residues 1945–1955 (RMASARSSGSE) and 1983–1997 (LSSA…QAAS). Residues 2037 to 2114 (GLAPLAPRRT…PLPRVAPPGT (78 aa)) form an interaction with MAPRE1 and MAPRE3 region. Polar residues predominate over residues 2165 to 2179 (DVATSKTNSSTSPSL).

The protein belongs to the adenomatous polyposis coli (APC) family. In terms of assembly, interacts with PSRC1. Interacts with MAPRE3. Interacts with APC, CTNNB1, TP53BP2, MAPRE1 and possibly with AXIN2. As to expression, expressed in brain and other neural tissues.

It is found in the cytoplasm. The protein localises to the cytoskeleton. Its subcellular location is the golgi apparatus. It localises to the perinuclear region. Stabilizes microtubules and may regulate actin fiber dynamics through the activation of Rho family GTPases. May also function in Wnt signaling by promoting the rapid degradation of CTNNB1. The polypeptide is Adenomatous polyposis coli protein 2 (Apc2) (Mus musculus (Mouse)).